The sequence spans 74 residues: Ferredoxin MycCII (74 aa).

The 4Fe-4S ferredoxin-type domain maps to Met-1–Asp-29. Positions 10, 16, and 54 each coordinate [3Fe-4S] cluster.

It depends on [3Fe-4S] cluster as a cofactor.

It participates in antibiotic biosynthesis; mycinamicin biosynthesis. In terms of biological role, specific electron transport protein capable of effectively supporting cytochrome P450 MycCI activity in the biosynthesis of mycinamicin, a 16-membered macrolide antibiotic. The sequence is that of Ferredoxin MycCII from Micromonospora griseorubida.